Here is a 509-residue protein sequence, read N- to C-terminus: Solute carrier family 2, facilitated glucose transporter member 4 (509 aa).

The Cytoplasmic segment spans residues 1-23; sequence MPSGFQQIGSDDGEPPRQRVTGT. The segment at 7–13 is interaction with SRFBP1; that stretch reads QIGSDDG. Phosphoserine is present on Ser10. The helical transmembrane segment at 24–44 threads the bilayer; sequence LVLAVFSAVLGSLQFGYNIGV. Over 45 to 80 the chain is Extracellular; it reads INAPQKVIEQSYNATWLGRQGPGGPDSIPQGTLTTL. Asn57 is a glycosylation site (N-linked (GlcNAc...) asparagine). Residues 81 to 101 form a helical membrane-spanning segment; the sequence is WALSVAIFSVGGMISSFLIGI. Residues 102-110 are Cytoplasmic-facing; that stretch reads ISQWLGRKR. A helical transmembrane segment spans residues 111-131; it reads AMLANNVLAVLGGALMGLANA. The Extracellular portion of the chain corresponds to 132 to 141; the sequence is AASYEILILG. The chain crosses the membrane as a helical span at residues 142 to 162; the sequence is RFLIGAYSGLTSGLVPMYVGE. Residues 163 to 170 are Cytoplasmic-facing; that stretch reads IAPTHLRG. Residues 171–191 traverse the membrane as a helical segment; the sequence is ALGTLNQLAIVIGILVAQVLG. Gln177 serves as a coordination point for D-glucose. Topologically, residues 192–200 are extracellular; that stretch reads LESMLGTAT. Residues 201 to 221 form a helical membrane-spanning segment; it reads LWPLLLALTVLPALLQLILLP. Over 222-286 the chain is Cytoplasmic; that stretch reads FCPESPRYLY…QLLGSRTHRQ (65 aa). Cys223 is lipidated: S-palmitoyl cysteine. Position 274 is a phosphoserine; by SGK1 (Ser274). Residues 287-307 form a helical membrane-spanning segment; sequence PLIIAVVLQLSQQLSGINAVF. Residues 298–299 and Asn304 each bind D-glucose; that span reads QQ. Residues 308 to 322 are Extracellular-facing; that stretch reads YYSTSIFESAGVGQP. The chain crosses the membrane as a helical span at residues 323–343; it reads AYATIGAGVVNTVFTLVSVLL. D-glucose is bound at residue Asn333. Residues 344 to 352 are Cytoplasmic-facing; that stretch reads VERAGRRTL. The helical transmembrane segment at 353-373 threads the bilayer; it reads HLLGLAGMCGCAILMTVALLL. Residues 374-384 are Extracellular-facing; it reads LERVPAMSYVS. The helical transmembrane segment at 385–405 threads the bilayer; the sequence is IVAIFGFVAFFEIGPGPIPWF. 2 residues coordinate D-glucose: Glu396 and Trp404. Over 406–416 the chain is Cytoplasmic; the sequence is IVAELFSQGPR. The helical transmembrane segment at 417–437 threads the bilayer; the sequence is PAAMAVAGFSNWTCNFIVGMG. The Extracellular portion of the chain corresponds to 438–444; it reads FQYVADA. A helical membrane pass occupies residues 445–465; the sequence is MGPYVFLLFAVLLLGFFIFTF. The Cytoplasmic segment spans residues 466–508; it reads LKVPETRGRTFDQISAAFRRTPSLLEQEVKPSTELEYLGPDEN. Position 486 is a phosphothreonine (Thr486). Phosphoserine is present on Ser488. The Dileucine internalization motif motif lies at 489–490; sequence LL.

This sequence belongs to the major facilitator superfamily. Sugar transporter (TC 2.A.1.1) family. Glucose transporter subfamily. As to quaternary structure, binds to DAXX. Interacts via its N-terminus with SRFBP1. Interacts with NDUFA9. Interacts with TRARG1; the interaction is required for proper SLC2A4 recycling after insulin stimulation. Post-translationally, sumoylated. Palmitoylated. Palmitoylation by ZDHHC7 controls the insulin-dependent translocation of GLUT4 to the plasma membrane. Expressed in skeletal and cardiac muscles. Expressed in brown and white adipose tissues.

Its subcellular location is the cell membrane. It is found in the endomembrane system. It localises to the cytoplasm. The protein localises to the perinuclear region. It catalyses the reaction D-glucose(out) = D-glucose(in). Functionally, insulin-regulated facilitative glucose transporter, which plays a key role in removal of glucose from circulation. Response to insulin is regulated by its intracellular localization: in the absence of insulin, it is efficiently retained intracellularly within storage compartments in muscle and fat cells. Upon insulin stimulation, translocates from these compartments to the cell surface where it transports glucose from the extracellular milieu into the cell. The sequence is that of Solute carrier family 2, facilitated glucose transporter member 4 from Mus musculus (Mouse).